The primary structure comprises 401 residues: Beta-ketoadipyl-CoA thiolase (401 aa).

The active-site Acyl-thioester intermediate is the C91. Active-site proton acceptor residues include H357 and C387.

The protein belongs to the thiolase-like superfamily. Thiolase family.

It catalyses the reaction succinyl-CoA + acetyl-CoA = 3-oxoadipyl-CoA + CoA. It participates in aromatic compound metabolism; beta-ketoadipate pathway; acetyl-CoA and succinyl-CoA from 3-oxoadipate: step 2/2. In terms of biological role, catalyzes thiolytic cleavage of beta-ketoadipyl-CoA to succinyl-CoA and acetyl-CoA. The protein is Beta-ketoadipyl-CoA thiolase (pcaF) of Pseudomonas aeruginosa (strain ATCC 15692 / DSM 22644 / CIP 104116 / JCM 14847 / LMG 12228 / 1C / PRS 101 / PAO1).